The primary structure comprises 37 residues: ACKDGFPTATCQHAKLVGNCKNSQKYRANCAKTCGPC.

A ShKT domain is found at Cys-2 to Cys-37. Intrachain disulfides connect Cys-2–Cys-37, Cys-11–Cys-30, and Cys-20–Cys-34. Positions Lys-25–Tyr-26 are crucial for binding to potassium channels.

This sequence belongs to the sea anemone type 1 potassium channel toxin family. Type 1b subfamily.

The protein resides in the secreted. It is found in the nematocyst. In terms of biological role, inhibits voltage-gated potassium channels (IC(50)=14.42 nM for rKCNA1/Kv1.1, IC(50)=80.4 nM for rKCNA2/Kv1.2, IC(50)=7.76 nM for rKCNA6/Kv1.6, IC(50)=13.12 nM for hKCNA3/Kv1.3, and IC(50)=49.14 nM for insect Shaker IR). Binds the Shaker IR channels in a voltage-independent manner. The polypeptide is Kappa-actitoxin-Bcs3b (Bunodosoma caissarum (Sea anemone)).